Reading from the N-terminus, the 243-residue chain is 1-(5-phosphoribosyl)-5-[(5-phosphoribosylamino)methylideneamino] imidazole-4-carboxamide isomerase (243 aa).

Asp8 functions as the Proton acceptor in the catalytic mechanism. Residue Asp129 is the Proton donor of the active site.

It belongs to the HisA/HisF family.

The protein localises to the cytoplasm. It carries out the reaction 1-(5-phospho-beta-D-ribosyl)-5-[(5-phospho-beta-D-ribosylamino)methylideneamino]imidazole-4-carboxamide = 5-[(5-phospho-1-deoxy-D-ribulos-1-ylimino)methylamino]-1-(5-phospho-beta-D-ribosyl)imidazole-4-carboxamide. Its pathway is amino-acid biosynthesis; L-histidine biosynthesis; L-histidine from 5-phospho-alpha-D-ribose 1-diphosphate: step 4/9. The chain is 1-(5-phosphoribosyl)-5-[(5-phosphoribosylamino)methylideneamino] imidazole-4-carboxamide isomerase from Geobacter sp. (strain M21).